Consider the following 350-residue polypeptide: Biotin synthase (350 aa).

One can recognise a Radical SAM core domain in the interval 41–268 (NEVQISRLLS…LSRVRLSAGR (228 aa)). [4Fe-4S] cluster contacts are provided by Cys56, Cys60, and Cys63. [2Fe-2S] cluster is bound by residues Cys100, Cys131, Cys191, and Arg263.

The protein belongs to the radical SAM superfamily. Biotin synthase family. Homodimer. It depends on [4Fe-4S] cluster as a cofactor. The cofactor is [2Fe-2S] cluster.

It catalyses the reaction (4R,5S)-dethiobiotin + (sulfur carrier)-SH + 2 reduced [2Fe-2S]-[ferredoxin] + 2 S-adenosyl-L-methionine = (sulfur carrier)-H + biotin + 2 5'-deoxyadenosine + 2 L-methionine + 2 oxidized [2Fe-2S]-[ferredoxin]. Its pathway is cofactor biosynthesis; biotin biosynthesis; biotin from 7,8-diaminononanoate: step 2/2. Functionally, catalyzes the conversion of dethiobiotin (DTB) to biotin by the insertion of a sulfur atom into dethiobiotin via a radical-based mechanism. The polypeptide is Biotin synthase (Shewanella putrefaciens (strain CN-32 / ATCC BAA-453)).